The primary structure comprises 272 residues: Dioscorin DB3L (272 aa).

An N-terminal signal peptide occupies residues 1–25; sequence MSSSTLFHLFLLSSLLFSCLSNARP. Residues 28-263 form the Alpha-carbonic anhydrase domain; it reads DDFSYIEGSP…LKFRTIFFYP (236 aa). C53 and C213 form a disulfide bridge.

The protein belongs to the alpha-class carbonic anhydrase family. Homodimer; disulfide-linked. Post-translationally, not glycosylated. As to expression, expressed in tuber (at protein level).

Loss of hemagglutinating activity by EDTA treatment. The activity is fully recovered by the addition of 5 mM Ca(2+) ions, but not with Mg(2+) and Mn 2(+). Hemagglutination activity is inhibited by maltose and its derivatives, with maltopentaose and maltohexaose being the best inhibitors followed by maltose and iso maltose. Not inhibited by glycoproteins. Functionally, maltose-binding lectin. No affinity is detected toward glucose. Has hemagglutinating activity against rabbit erythrocytes at 3.9 ug/ml. No carbonate dehydratase or trypsin inhibitor activity detected by measuring the hydrolysis of 4-nitrophenyl acetate or the inhibition of bovine trypsin-catalyzed hydrolysis of N-benzoyl-L-arginine ethyl ester, respectively. The chain is Dioscorin DB3L from Dioscorea polystachya (Chinese yam).